The chain runs to 275 residues: Ribosomal RNA small subunit methyltransferase A (275 aa).

S-adenosyl-L-methionine is bound by residues Asn-28, Leu-30, Gly-55, Glu-77, Asp-103, and Asn-123.

This sequence belongs to the class I-like SAM-binding methyltransferase superfamily. rRNA adenine N(6)-methyltransferase family. RsmA subfamily.

The protein resides in the cytoplasm. It carries out the reaction adenosine(1518)/adenosine(1519) in 16S rRNA + 4 S-adenosyl-L-methionine = N(6)-dimethyladenosine(1518)/N(6)-dimethyladenosine(1519) in 16S rRNA + 4 S-adenosyl-L-homocysteine + 4 H(+). In terms of biological role, specifically dimethylates two adjacent adenosines (A1518 and A1519) in the loop of a conserved hairpin near the 3'-end of 16S rRNA in the 30S particle. May play a critical role in biogenesis of 30S subunits. This is Ribosomal RNA small subunit methyltransferase A from Rhizobium johnstonii (strain DSM 114642 / LMG 32736 / 3841) (Rhizobium leguminosarum bv. viciae).